We begin with the raw amino-acid sequence, 401 residues long: Nodulation protein E (401 aa).

The Ketosynthase family 3 (KS3) domain maps to 2 to 400 (DRRVVITGMG…GTNAVLAFKQ (399 aa)). Active-site for beta-ketoacyl synthase activity residues include Cys-161, His-293, and His-330. Residues 328–347 (HAHCIGAASALEMIACVMAI) traverse the membrane as a helical segment.

It belongs to the thiolase-like superfamily. Beta-ketoacyl-ACP synthases family.

Its subcellular location is the cell inner membrane. Proposed to synthesize NOD factor fatty acyl chain. Involved in the synthesis of a highly unsaturated fatty acid moiety, which forms part of a lipo-oligosaccharide that is responsible for host specificity. This chain is Nodulation protein E (nodE), found in Rhizobium meliloti (Ensifer meliloti).